The following is a 247-amino-acid chain: GTP cyclohydrolase 1 type 2 homolog (247 aa).

A divalent metal cation-binding residues include His-63, His-64, Asp-101, His-215, and Glu-219.

Belongs to the GTP cyclohydrolase I type 2/NIF3 family. As to quaternary structure, toroid-shaped homohexamer. In the hexamer, 3 dimers assemble to form a ring-like structure surrounding a central hole.

In terms of biological role, provides significant protection from radiation damage and may be involved in the degradation of radiation-damaged nucleotides. The polypeptide is GTP cyclohydrolase 1 type 2 homolog (ybgI) (Salmonella typhi).